The following is an 84-amino-acid chain: Delta-stichotoxin-Sgt3a (84 aa).

An N-terminal signal peptide occupies residues 1-19 (MAYLKIVLVALMLVVAVSA). A propeptide spanning residues 20-33 (MRLSDQEDQDISVA) is cleaved from the precursor. Cystine bridges form between C38–C78, C40–C68, and C61–C79. G84 is a propeptide.

This sequence belongs to the sea anemone sodium channel inhibitory toxin family. Type II subfamily.

It is found in the secreted. Its subcellular location is the nematocyst. Binds specifically to voltage-gated sodium channels (Nav), thereby delaying their inactivation during signal transduction. This Stichodactyla gigantea (Giant carpet anemone) protein is Delta-stichotoxin-Sgt3a.